Here is a 361-residue protein sequence, read N- to C-terminus: Phosphoserine aminotransferase (361 aa).

Residue R42 coordinates L-glutamate. Pyridoxal 5'-phosphate is bound by residues 76–77 (AR), W102, T153, D173, and Q196. Residue K197 is modified to N6-(pyridoxal phosphate)lysine. 238-239 (NT) serves as a coordination point for pyridoxal 5'-phosphate.

Belongs to the class-V pyridoxal-phosphate-dependent aminotransferase family. SerC subfamily. Homodimer. Pyridoxal 5'-phosphate is required as a cofactor.

It localises to the cytoplasm. It carries out the reaction O-phospho-L-serine + 2-oxoglutarate = 3-phosphooxypyruvate + L-glutamate. It catalyses the reaction 4-(phosphooxy)-L-threonine + 2-oxoglutarate = (R)-3-hydroxy-2-oxo-4-phosphooxybutanoate + L-glutamate. The protein operates within amino-acid biosynthesis; L-serine biosynthesis; L-serine from 3-phospho-D-glycerate: step 2/3. Its pathway is cofactor biosynthesis; pyridoxine 5'-phosphate biosynthesis; pyridoxine 5'-phosphate from D-erythrose 4-phosphate: step 3/5. Functionally, catalyzes the reversible conversion of 3-phosphohydroxypyruvate to phosphoserine and of 3-hydroxy-2-oxo-4-phosphonooxybutanoate to phosphohydroxythreonine. The polypeptide is Phosphoserine aminotransferase (Pectobacterium atrosepticum (strain SCRI 1043 / ATCC BAA-672) (Erwinia carotovora subsp. atroseptica)).